The primary structure comprises 190 residues: Imidazoleglycerol-phosphate dehydratase (190 aa).

The protein belongs to the imidazoleglycerol-phosphate dehydratase family.

The protein localises to the cytoplasm. It catalyses the reaction D-erythro-1-(imidazol-4-yl)glycerol 3-phosphate = 3-(imidazol-4-yl)-2-oxopropyl phosphate + H2O. Its pathway is amino-acid biosynthesis; L-histidine biosynthesis; L-histidine from 5-phospho-alpha-D-ribose 1-diphosphate: step 6/9. This is Imidazoleglycerol-phosphate dehydratase from Nitratiruptor sp. (strain SB155-2).